We begin with the raw amino-acid sequence, 374 residues long: Nuclear hormone receptor family member nhr-57 (374 aa).

Positions 7–84 form a DNA-binding region, nuclear receptor; it reads RKYCSVCHQL…VGMNPEVVQA (78 aa). 2 consecutive NR C4-type zinc fingers follow at residues 10–30 and 48–67; these read CSVC…CKAC and CRKK…CKSC. The NR LBD domain occupies 124 to 374; the sequence is QMTPTLCGVM…DKIYKIIDGQ (251 aa).

The protein belongs to the nuclear hormone receptor family.

Its subcellular location is the nucleus. Its function is as follows. Orphan nuclear receptor. The protein is Nuclear hormone receptor family member nhr-57 (nhr-57) of Caenorhabditis elegans.